The sequence spans 223 residues: Urease accessory protein UreF (223 aa).

It belongs to the UreF family. UreD, UreF and UreG form a complex that acts as a GTP-hydrolysis-dependent molecular chaperone, activating the urease apoprotein by helping to assemble the nickel containing metallocenter of UreC. The UreE protein probably delivers the nickel.

The protein resides in the cytoplasm. Its function is as follows. Required for maturation of urease via the functional incorporation of the urease nickel metallocenter. The polypeptide is Urease accessory protein UreF (Paenarthrobacter aurescens (strain TC1)).